We begin with the raw amino-acid sequence, 345 residues long: MATLSVGEPQEMEVDRRGESEESGDDETKRKSLNGEVDSLQAPSTVPEESPVDMDTITLDPEEEDVDLVHCRIGKIEGLEVLLKAKTISLRQNLIKRIENLESLVSLRELDLYDNQIRKLENLQALTELEQLDVSFNLLRKIEGLDSLTKVKKLFLLHNKIASIANLDHLTSLQMLELGSNRIRVIENLDSLSSLESLFLGTNKITQLQNLDGLHNLTVLSIQSNRITKLEGLQNLVNLRELYLSHNGIEVMEGLENNKKLSTLDIAANRIKKIENISHLTDLKEFWMNDNQIENWADLDELKNAKGLETVYLERNPLQKDPQYRRKIMLALPSVRQIDATFIRF.

The segment at 1 to 53 (MATLSVGEPQEMEVDRRGESEESGDDETKRKSLNGEVDSLQAPSTVPEESPVD) is disordered. Residues 13–30 (EVDRRGESEESGDDETKR) are compositionally biased toward basic and acidic residues. 11 LRR repeats span residues 62–83 (EEED…EVLL), 84–105 (KAKT…ESLV), 106–127 (SLRE…QALT), 128–149 (ELEQ…DSLT), 150–171 (KVKK…DHLT), 172–193 (SLQM…DSLS), 194–215 (SLES…DGLH), 216–237 (NLTV…QNLV), 238–259 (NLRE…ENNK), 260–281 (KLST…SHLT), and 282–303 (DLKE…DELK). The 30-residue stretch at 316–345 (NPLQKDPQYRRKIMLALPSVRQIDATFIRF) folds into the LRRCT domain.

This sequence belongs to the SDS22 family.

The protein localises to the nucleus. Functionally, regulatory subunit of protein phosphatase 1. This is Protein phosphatase 1 regulatory subunit 7 (ppp1r7) from Danio rerio (Zebrafish).